The following is an 855-amino-acid chain: Protein KRI1 homolog (855 aa).

Disordered regions lie at residues 47 to 67, 82 to 117, 130 to 196, 312 to 342, 424 to 453, and 589 to 855; these read VSES…VDPK, KDPC…KAKP, EHNG…KTKE, SLRR…MKEL, YDPR…CDYD, and KSLY…KKDN. Over residues 48–64 the composition is skewed to acidic residues; sequence SESEFDSDSSSSEEDEV. Basic and acidic residues predominate over residues 82-91; the sequence is KDPCIYDKGT. S95, S97, S98, S137, and S138 each carry phosphoserine. Over residues 160 to 176 the composition is skewed to basic and acidic residues; that stretch reads EEERRLKAEFRKVMNKE. S179 bears the Phosphoserine mark. The stretch at 307–362 forms a coiled coil; it reads RTIEQSLRRTDDKRKEKRKELKERKDQEKQQKMKELELVKEMKRKEIDEKIRKLKA. Positions 441–452 are enriched in acidic residues; the sequence is CEDDDFNMDCDY. Over residues 609–619 the composition is skewed to low complexity; the sequence is VTPAEATAPAE. Over residues 630 to 640 the composition is skewed to basic residues; that stretch reads KSKRKRLKRKA. Basic and acidic residues-rich tracts occupy residues 650–664 and 674–692; these read VLKE…KEAD and SSKK…DANQ. Polar residues-rich tracts occupy residues 720–748, 756–773, and 792–805; these read VQNG…TTES, SNGN…QQRQ, and ANGT…NQKP. Low complexity predominate over residues 812-826; that stretch reads KKTNNFKAKNKQNNN. Over residues 842–855 the composition is skewed to basic residues; sequence RKFHKREKYGKKDN.

This sequence belongs to the KRI1 family.

This chain is Protein KRI1 homolog, found in Drosophila melanogaster (Fruit fly).